Consider the following 617-residue polypeptide: Dihydroxy-acid dehydratase (617 aa).

Aspartate 81 provides a ligand contact to Mg(2+). Cysteine 122 is a binding site for [2Fe-2S] cluster. 2 residues coordinate Mg(2+): aspartate 123 and lysine 124. An N6-carboxylysine modification is found at lysine 124. A [2Fe-2S] cluster-binding site is contributed by cysteine 195. Residue glutamate 492 coordinates Mg(2+). The Proton acceptor role is filled by serine 518.

Belongs to the IlvD/Edd family. As to quaternary structure, homodimer. [2Fe-2S] cluster serves as cofactor. Mg(2+) is required as a cofactor.

The catalysed reaction is (2R)-2,3-dihydroxy-3-methylbutanoate = 3-methyl-2-oxobutanoate + H2O. It carries out the reaction (2R,3R)-2,3-dihydroxy-3-methylpentanoate = (S)-3-methyl-2-oxopentanoate + H2O. Its pathway is amino-acid biosynthesis; L-isoleucine biosynthesis; L-isoleucine from 2-oxobutanoate: step 3/4. It participates in amino-acid biosynthesis; L-valine biosynthesis; L-valine from pyruvate: step 3/4. Functions in the biosynthesis of branched-chain amino acids. Catalyzes the dehydration of (2R,3R)-2,3-dihydroxy-3-methylpentanoate (2,3-dihydroxy-3-methylvalerate) into 2-oxo-3-methylpentanoate (2-oxo-3-methylvalerate) and of (2R)-2,3-dihydroxy-3-methylbutanoate (2,3-dihydroxyisovalerate) into 2-oxo-3-methylbutanoate (2-oxoisovalerate), the penultimate precursor to L-isoleucine and L-valine, respectively. In Azorhizobium caulinodans (strain ATCC 43989 / DSM 5975 / JCM 20966 / LMG 6465 / NBRC 14845 / NCIMB 13405 / ORS 571), this protein is Dihydroxy-acid dehydratase.